Consider the following 576-residue polypeptide: Putative export ATP-binding/permease protein RC1073 (576 aa).

The ABC transmembrane type-1 domain maps to 20-303 (LIIVMISLLS…IFELLSEMHL (284 aa)). The next 6 membrane-spanning stretches (helical) occupy residues 21–41 (IIVM…GSVF), 57–77 (VDNS…ASFF), 135–155 (FLSF…LMFF), 158–178 (FKLA…LIKF), 242–262 (ALFF…VVWI), and 277–297 (IISF…IFEL). In terms of domain architecture, ABC transporter spans 336 to 572 (IEFKNVDFTY…SEIYRNICRE (237 aa)). 371–378 (GRSGAGKS) is a binding site for ATP.

The protein belongs to the ABC transporter superfamily. Homodimer.

It localises to the cell inner membrane. Part of an ABC transporter complex. Transmembrane domains (TMD) form a pore in the inner membrane and the ATP-binding domain (NBD) is responsible for energy generation. The sequence is that of Putative export ATP-binding/permease protein RC1073 from Rickettsia conorii (strain ATCC VR-613 / Malish 7).